The following is a 686-amino-acid chain: Delta-like protein 4 (686 aa).

An N-terminal signal peptide occupies residues 1-26; the sequence is MTPASRSACRWALLLLAVLWPQQRAA. The Extracellular portion of the chain corresponds to 27-532; the sequence is GSGIFQLRLQ…GLPPSFPWVA (506 aa). Cystine bridges form between C51–C55 and C62–C75. Residues N79, N109, and N162 are each glycosylated (N-linked (GlcNAc...) asparagine). One can recognise a DSL domain in the interval 174–218; the sequence is VICSDNYYGESCSRLCKKRDDHFGHYECQPDGSLSCLPGWTGKYC. A disulfide bond links C176 and C185. Interaction with Notch1 regions lie at residues 186 to 188 and 192 to 196; these read SRL and RDDHF. 26 cysteine pairs are disulfide-bonded: C189–C201, C209–C218, C223–C234, C227–C240, C242–C251, C254–C265, C260–C271, C273–C282, C289–C301, C295–C311, C313–C322, C329–C340, C334–C349, C351–C360, C367–C378, C372–C389, C391–C400, C407–C418, C412–C427, C429–C438, C445–C456, C450–C465, C467–C476, C485–C496, C490–C507, and C509–C518. 8 EGF-like domains span residues 219–252, 253–283, 285–323, 325–361, 364–401, 403–439, 441–477, and 481–519; these read DQPICLSGCHEQNGYCSKPDECICRPGWQGRLCN, ECIPHNGCRHGTCSIPWQCACDEGWGGLFCD, DLNYCTHHSPCKNGSTCSNSGPKGYTCTCLPGYTGEHCE, GLSKCASNPCRNGGSCKDQENSYHCLCPPGYYGQHCE, TLTCADSPCFNGGSCRERNQGSSYACECPPNFTGSNCE, KVDRCTSNPCANGGQCQNRGPSRTCRCRPGFTGTHCE, HISDCARSPCAHGGTCHDLENGPVCTCPAGFSGRRCE, and THDACASGPCFNGATCYTGLSPNNFVCNCPYGFVGSRCE. N297 is a glycosylation site (N-linked (GlcNAc...) asparagine). An N-linked (GlcNAc...) asparagine glycan is attached at N394. Residues 533–553 form a helical membrane-spanning segment; sequence VSLGVGLVVLLVLLVMVVVAV. The Cytoplasmic segment spans residues 554–686; that stretch reads RQLRLRRPDD…RNECVIATEV (133 aa).

In terms of assembly, interacts with NOTCH4. Interacts (via N-terminal DSL and MNNL domains) with NOTCH1 (via EGF-like domains). As to expression, expressed in vascular endothelium. Expressed in retina at least during embryogenesis.

The protein resides in the cell membrane. Its function is as follows. Involved in the Notch signaling pathway as Notch ligand. Activates NOTCH1 and NOTCH4. Involved in angiogenesis; negatively regulates endothelial cell proliferation and migration and angiogenic sprouting. Essential for retinal progenitor proliferation. Required for suppressing rod fates in late retinal progenitors as well as for proper generation of other retinal cell types. During spinal cord neurogenesis, inhibits V2a interneuron fate. In Mus musculus (Mouse), this protein is Delta-like protein 4 (Dll4).